The following is a 260-amino-acid chain: Protein TONNEAU 1a (260 aa).

A LisH domain is found at serine 73–lysine 105. Disordered stretches follow at residues threonine 147–threonine 224 and aspartate 236–aspartate 260. Positions glutamate 161–serine 175 are enriched in low complexity. Residues asparagine 248–aspartate 260 show a composition bias toward basic and acidic residues.

As to quaternary structure, interacts with CEN1, LNG1/TRM2 and LNG2/TRM1 (via C-terminus).

The protein localises to the cytoplasm. It localises to the cytoskeleton. Functionally, involved in the control of the dynamic organization of the cortical cytoskeleton. May play a role in the organization of microtubule arrays at the centrosome through interaction with centrin 1 (CEN1). This Arabidopsis thaliana (Mouse-ear cress) protein is Protein TONNEAU 1a (TON1A).